Consider the following 259-residue polypeptide: UPF0246 protein Rfer_2372 (259 aa).

Belongs to the UPF0246 family.

The sequence is that of UPF0246 protein Rfer_2372 from Albidiferax ferrireducens (strain ATCC BAA-621 / DSM 15236 / T118) (Rhodoferax ferrireducens).